Reading from the N-terminus, the 444-residue chain is Putative F-box protein At1g64540 (444 aa).

An F-box domain is found at 4 to 50 (REFISNLPDEILGKILSLLPTKLGVSTSVLSKRWRNLILLVDNFDLE).

The protein is Putative F-box protein At1g64540 of Arabidopsis thaliana (Mouse-ear cress).